A 1969-amino-acid polypeptide reads, in one-letter code: Myosin-3 (1969 aa).

The Myosin N-terminal SH3-like domain maps to 33–82 (DSKKNCWIPDPEDGFVAAEIQSTTGDQVTVVTVKGNQITVKKDQCQEMNP). One can recognise a Myosin motor domain in the interval 86-791 (DKTEDMANLT…VLAKLEDLRD (706 aa)). Lys130 is modified (N6,N6,N6-trimethyllysine). Residue 179 to 186 (GESGAGKT) participates in ATP binding. Actin-binding stretches follow at residues 667-689 (LNNL…IPNE) and 770-784 (KIGE…GVLA). The 30-residue stretch at 794 to 823 (LSRIVTMFQSRIRSYLAKAEVRRRYEQQTG) folds into the IQ domain. A coiled-coil region spans residues 853–1941 (LKAGKEQEAM…KMRNKIRASA (1089 aa)). Disordered stretches follow at residues 943–967 (QERH…KKHV), 993–1029 (DEMA…EEDK), and 1134–1153 (ELES…NELQ). Basic and acidic residues-rich tracts occupy residues 1001–1029 (SVAK…EEDK) and 1137–1153 (SERN…NELQ).

Belongs to the TRAFAC class myosin-kinesin ATPase superfamily. Myosin family. Muscle myosin is a hexameric protein that consists of 2 heavy chain subunits (MHC), 2 alkali light chain subunits (MLC) and 2 regulatory light chain subunits (MLC-2).

It localises to the cytoplasm. It is found in the myofibril. Its subcellular location is the sarcomere. The protein localises to the a band. In terms of biological role, essential for muscle contraction. Involved in ovulation likely by regulating the contraction of gonadal myoepithelial sheath cells. This chain is Myosin-3, found in Caenorhabditis briggsae.